The primary structure comprises 205 residues: Thiamine-phosphate synthase (205 aa).

4-amino-2-methyl-5-(diphosphooxymethyl)pyrimidine contacts are provided by residues 37–41 (QVREK) and Asn69. Mg(2+) contacts are provided by Asp70 and Asp89. 4-amino-2-methyl-5-(diphosphooxymethyl)pyrimidine is bound at residue Ser108. Residue 134–136 (TGS) coordinates 2-[(2R,5Z)-2-carboxy-4-methylthiazol-5(2H)-ylidene]ethyl phosphate. Lys137 serves as a coordination point for 4-amino-2-methyl-5-(diphosphooxymethyl)pyrimidine. Residues Gly165 and 185–186 (IS) contribute to the 2-[(2R,5Z)-2-carboxy-4-methylthiazol-5(2H)-ylidene]ethyl phosphate site.

This sequence belongs to the thiamine-phosphate synthase family. Mg(2+) is required as a cofactor.

The enzyme catalyses 2-[(2R,5Z)-2-carboxy-4-methylthiazol-5(2H)-ylidene]ethyl phosphate + 4-amino-2-methyl-5-(diphosphooxymethyl)pyrimidine + 2 H(+) = thiamine phosphate + CO2 + diphosphate. It catalyses the reaction 2-(2-carboxy-4-methylthiazol-5-yl)ethyl phosphate + 4-amino-2-methyl-5-(diphosphooxymethyl)pyrimidine + 2 H(+) = thiamine phosphate + CO2 + diphosphate. The catalysed reaction is 4-methyl-5-(2-phosphooxyethyl)-thiazole + 4-amino-2-methyl-5-(diphosphooxymethyl)pyrimidine + H(+) = thiamine phosphate + diphosphate. It functions in the pathway cofactor biosynthesis; thiamine diphosphate biosynthesis; thiamine phosphate from 4-amino-2-methyl-5-diphosphomethylpyrimidine and 4-methyl-5-(2-phosphoethyl)-thiazole: step 1/1. Its function is as follows. Condenses 4-methyl-5-(beta-hydroxyethyl)thiazole monophosphate (THZ-P) and 2-methyl-4-amino-5-hydroxymethyl pyrimidine pyrophosphate (HMP-PP) to form thiamine monophosphate (TMP). This is Thiamine-phosphate synthase from Clostridium botulinum (strain Kyoto / Type A2).